The sequence spans 357 residues: 4-hydroxy-2-oxovalerate aldolase (357 aa).

A disordered region spans residues 1–21; the sequence is MSQEAARDAAAGRPVQIHDPT. The 251-residue stretch at 15–265 folds into the Pyruvate carboxyltransferase domain; it reads VQIHDPTLRD…RTGIDLYRLL (251 aa). 23–24 contacts substrate; sequence RD. Residue D24 coordinates Mn(2+). H27 acts as the Proton acceptor in catalysis. Substrate-binding residues include S177 and H204. Positions 204 and 206 each coordinate Mn(2+).

This sequence belongs to the 4-hydroxy-2-oxovalerate aldolase family.

It carries out the reaction (S)-4-hydroxy-2-oxopentanoate = acetaldehyde + pyruvate. Functionally, involved in the biosynthesis of the peptidyl nucleoside antibiotic nikkomycin. The chain is 4-hydroxy-2-oxovalerate aldolase from Streptomyces tendae.